Reading from the N-terminus, the 323-residue chain is Cytochrome c biogenesis protein CcsA (323 aa).

The next 8 helical transmembrane spans lie at 18 to 38 (VSVV…VGLY), 43 to 63 (KGML…WVYW), 71 to 91 (LYES…IPSF), 99 to 119 (LNVI…SGLL), 146 to 166 (LGYA…IIIF), 227 to 247 (VISL…VWAN), 256 to 276 (WDPK…YLHI), and 288 to 308 (AIVA…VNLL).

This sequence belongs to the CcmF/CycK/Ccl1/NrfE/CcsA family. As to quaternary structure, may interact with Ccs1.

It localises to the plastid. The protein resides in the chloroplast thylakoid membrane. In terms of biological role, required during biogenesis of c-type cytochromes (cytochrome c6 and cytochrome f) at the step of heme attachment. This is Cytochrome c biogenesis protein CcsA from Spinacia oleracea (Spinach).